The sequence spans 404 residues: Protrudin (404 aa).

Residues 1-20 are disordered; the sequence is MQTSEREGCGPEVSPSTVPE. Residues 1–66 lie on the Cytoplasmic side of the membrane; that stretch reads MQTSEREGCG…AGDGVRYLLR (66 aa). Residues 1-92 are sufficient for homooligomerization; sequence MQTSEREGCG…LFLTLNEGAW (92 aa). Positions 1-205 are sufficient for localization to endoplasmic reticulum tubular network and for interactions with REEP1, REEP5, ATL1, ATL2, ATL3 and SPAST; it reads MQTSEREGCG…LYLLPLCWVL (205 aa). Positions 51 to 64 are necessary for interaction with RAB11A and function in neurite outgrowth; the sequence is LEPLKDAGDGVRYL. Residues 67-87 traverse the membrane as a helical segment; the sequence is WQTPLCSLLTCLGLNVLFLTL. N88 is a topological domain (lumenal). A helical membrane pass occupies residues 89 to 109; sequence EGAWYSVGALMISVPALLGYL. The Cytoplasmic portion of the chain corresponds to 110–187; the sequence is QEGCQARLSE…NPAVSSQFYG (78 aa). An intramembrane region (helical) is located at residues 188–208; that stretch reads ALLGTVCMLYLLPLCWVLALL. Residues 209 to 404 are Cytoplasmic-facing; that stretch reads NSTLFLGNVE…CASCNQTLSK (196 aa). The segment at 234-286 is disordered; sequence MNPKQEESAFESPPPSDAGGKGALVDCTPAPTPTEDLTPGSVEEAEEAEPDEE. The interval 271-354 is necessary for interaction with KIF5A; sequence TPGSVEEAEE…GCSATFSVLK (84 aa). Residues 276–286 show a composition bias toward acidic residues; the sequence is EEAEEAEPDEE. The tract at residues 286 to 292 is necessary for interaction with VAPA; sequence EFKDAIE. Residues 337–403 form an FYVE-type zinc finger; it reads TNNYGSCTGC…VCASCNQTLS (67 aa). Zn(2+) is bound by residues C343, C346, C359, C362, C367, C370, C395, and C398.

As to quaternary structure, can form homooligomers (monomers, dimers and tetramers). Interacts with RAB11A (GDP-bound form); regulates RAB11A. Interacts with FKBP8; may negatively regulate ZFYVE27 phosphorylation. Interacts with VAPA (via MSP domain); may regulate ZFYVE27 retention in the endoplasmic reticulum and its function in cell projections formation. Interacts with VAPB (via MSP domain). Interacts with RAB11B (GDP-bound form), REEP1, REEP5, ATL1, ATL2, ATL3, SPAST, SURF4, KIF5A, KIF5B, KIF5C and RTN3. Phosphorylated. Phosphorylation is induced by NGF through the MAPK/ERK pathway and modulates interaction with RAB11A.

It is found in the recycling endosome membrane. The protein localises to the endoplasmic reticulum membrane. Its subcellular location is the cell projection. The protein resides in the growth cone membrane. Functionally, key regulator of RAB11-dependent vesicular trafficking during neurite extension through polarized membrane transport. Promotes axonal elongation and contributes to the establishment of neuronal cell polarity. Involved in nerve growth factor-induced neurite formation in VAPA-dependent manner. Contributes to both the formation and stabilization of the tubular ER network. Involved in ER morphogenesis by regulating the sheet-to-tubule balance and possibly the density of tubule interconnections. Acts as an adapter protein that facilitates the interaction of KIF5A with VAPA, VAPB, SURF4, RAB11A, RAB11B and RTN3 and the ZFYVE27-KIF5A complex contributes to the transport of these proteins in neurons. Can induce formation of neurite-like membrane protrusions in non-neuronal cells in a KIF5A/B-dependent manner. The chain is Protrudin (ZFYVE27) from Bos taurus (Bovine).